The chain runs to 254 residues: Serotonin N-acetyltransferase 1, chloroplastic (254 aa).

A chloroplast-targeting transit peptide spans 1–83; that stretch reads MASAASASAS…NSTETVEPPS (83 aa). The N-acetyltransferase domain occupies 119–254; the sequence is VNVYDLQALC…IKGMFWYPRF (136 aa).

The protein localises to the plastid. It localises to the chloroplast. Its subcellular location is the nucleus. It catalyses the reaction a 2-arylethylamine + acetyl-CoA = an N-acetyl-2-arylethylamine + CoA + H(+). The protein operates within aromatic compound metabolism; melatonin biosynthesis; melatonin from serotonin: step 1/2. In terms of biological role, catalyzes the N-acetylation of serotonin into N-acetylserotonin, the penultimate step in the synthesis of melatonin. Catalyzes in vitro the N-acetylation of tryptamine to produce N-acetyltryptamine, 5-methoxytryptamine to produce melatonin and tyramine to produce N-acetyltyramine. Acetyltransferase required for geminivirus infection and systemic spread. The chain is Serotonin N-acetyltransferase 1, chloroplastic from Oryza sativa subsp. indica (Rice).